A 224-amino-acid polypeptide reads, in one-letter code: Cytidylate kinase (224 aa).

10–18 (GPASAGKST) lines the ATP pocket.

This sequence belongs to the cytidylate kinase family. Type 1 subfamily.

The protein resides in the cytoplasm. The enzyme catalyses CMP + ATP = CDP + ADP. It catalyses the reaction dCMP + ATP = dCDP + ADP. The protein is Cytidylate kinase of Leuconostoc mesenteroides subsp. mesenteroides (strain ATCC 8293 / DSM 20343 / BCRC 11652 / CCM 1803 / JCM 6124 / NCDO 523 / NBRC 100496 / NCIMB 8023 / NCTC 12954 / NRRL B-1118 / 37Y).